We begin with the raw amino-acid sequence, 614 residues long: Chaperone protein HtpG (614 aa).

The a; substrate-binding stretch occupies residues 1-324 (MSQIETKEFQ…SEELPLNISR (324 aa)). The segment at 325–537 (ETMQDSALIA…SHYGTHSMQR (213 aa)) is b. The c stretch occupies residues 538 to 614 (MMQLMNRDLQ…LNEILEKALR (77 aa)).

The protein belongs to the heat shock protein 90 family. As to quaternary structure, homodimer.

It localises to the cytoplasm. Its function is as follows. Molecular chaperone. Has ATPase activity. This Desulfitobacterium hafniense (strain Y51) protein is Chaperone protein HtpG.